An 84-amino-acid chain; its full sequence is NAD(P)H-quinone oxidoreductase subunit O (84 aa).

The protein belongs to the complex I NdhO subunit family. NDH-1 can be composed of about 15 different subunits; different subcomplexes with different compositions have been identified which probably have different functions.

It localises to the cellular thylakoid membrane. The catalysed reaction is a plastoquinone + NADH + (n+1) H(+)(in) = a plastoquinol + NAD(+) + n H(+)(out). It catalyses the reaction a plastoquinone + NADPH + (n+1) H(+)(in) = a plastoquinol + NADP(+) + n H(+)(out). Functionally, NDH-1 shuttles electrons from an unknown electron donor, via FMN and iron-sulfur (Fe-S) centers, to quinones in the respiratory and/or the photosynthetic chain. The immediate electron acceptor for the enzyme in this species is believed to be plastoquinone. Couples the redox reaction to proton translocation, and thus conserves the redox energy in a proton gradient. Cyanobacterial NDH-1 also plays a role in inorganic carbon-concentration. The chain is NAD(P)H-quinone oxidoreductase subunit O from Synechococcus sp. (strain CC9902).